The following is a 201-amino-acid chain: 3-isopropylmalate dehydratase small subunit (201 aa).

The protein belongs to the LeuD family. LeuD type 1 subfamily. In terms of assembly, heterodimer of LeuC and LeuD.

It carries out the reaction (2R,3S)-3-isopropylmalate = (2S)-2-isopropylmalate. Its pathway is amino-acid biosynthesis; L-leucine biosynthesis; L-leucine from 3-methyl-2-oxobutanoate: step 2/4. Catalyzes the isomerization between 2-isopropylmalate and 3-isopropylmalate, via the formation of 2-isopropylmaleate. The sequence is that of 3-isopropylmalate dehydratase small subunit from Azorhizobium caulinodans (strain ATCC 43989 / DSM 5975 / JCM 20966 / LMG 6465 / NBRC 14845 / NCIMB 13405 / ORS 571).